The chain runs to 287 residues: D-alanine--D-alanine ligase (287 aa).

Residues 98–283 (KTKQIAQSVG…FDDVVRITVE (186 aa)) form the ATP-grasp domain. Position 124–169 (124–169 (PVIIKPVDEGSSKGLFLCNNKEEAEEAVKKLAKPIIEDYIIGEELT)) interacts with ATP. Mg(2+)-binding residues include Asp-238, Glu-250, and Asn-252.

The protein belongs to the D-alanine--D-alanine ligase family. Mg(2+) is required as a cofactor. Requires Mn(2+) as cofactor.

Its subcellular location is the cytoplasm. It catalyses the reaction 2 D-alanine + ATP = D-alanyl-D-alanine + ADP + phosphate + H(+). Its pathway is cell wall biogenesis; peptidoglycan biosynthesis. Cell wall formation. This is D-alanine--D-alanine ligase from Fusobacterium nucleatum subsp. nucleatum (strain ATCC 25586 / DSM 15643 / BCRC 10681 / CIP 101130 / JCM 8532 / KCTC 2640 / LMG 13131 / VPI 4355).